Here is a 589-residue protein sequence, read N- to C-terminus: ATP-dependent lipid A-core flippase (589 aa).

Helical transmembrane passes span 29 to 49, 70 to 90, 157 to 177, 261 to 281, and 283 to 303; these read LLLV…TGFL, WLPV…YITD, VIGA…TILV, MIGA…ALAG, and LTAG…PGLK. Positions 32-314 constitute an ABC transmembrane type-1 domain; sequence VAALIAALIE…LTNVQNMVQR (283 aa). The 237-residue stretch at 346–582 folds into the ABC transporter domain; that stretch reads IEFRDVTARY…GGLYSHLHGM (237 aa). 380 to 387 provides a ligand contact to ATP; that stretch reads GRSGSGKS.

Belongs to the ABC transporter superfamily. Lipid exporter (TC 3.A.1.106) family. Homodimer.

It localises to the cell inner membrane. The enzyme catalyses ATP + H2O + lipid A-core oligosaccharideSide 1 = ADP + phosphate + lipid A-core oligosaccharideSide 2.. In terms of biological role, involved in lipopolysaccharide (LPS) biosynthesis. Translocates lipid A-core from the inner to the outer leaflet of the inner membrane. Transmembrane domains (TMD) form a pore in the inner membrane and the ATP-binding domain (NBD) is responsible for energy generation. The chain is ATP-dependent lipid A-core flippase from Xanthomonas axonopodis pv. citri (strain 306).